A 325-amino-acid chain; its full sequence is MATH domain and coiled-coil domain-containing protein At3g58340 (325 aa).

The 126-residue stretch at 6 to 131 (DKKFCWEIKN…NGQVMIVAEV (126 aa)) folds into the MATH domain. A coiled-coil region spans residues 266 to 315 (KVDWLEKKLDHVKEKKEKEQSGLIILQGIEQQLHELMHKCEKKKSEVLSV).

In Arabidopsis thaliana (Mouse-ear cress), this protein is MATH domain and coiled-coil domain-containing protein At3g58340.